The sequence spans 160 residues: Transcription elongation factor GreA (160 aa).

The stretch at Met1–Arg72 forms a coiled coil.

Belongs to the GreA/GreB family.

Necessary for efficient RNA polymerase transcription elongation past template-encoded arresting sites. The arresting sites in DNA have the property of trapping a certain fraction of elongating RNA polymerases that pass through, resulting in locked ternary complexes. Cleavage of the nascent transcript by cleavage factors such as GreA or GreB allows the resumption of elongation from the new 3'terminus. GreA releases sequences of 2 to 3 nucleotides. The polypeptide is Transcription elongation factor GreA (Streptococcus thermophilus (strain CNRZ 1066)).